Consider the following 211-residue polypeptide: Histone H1-beta, late embryonic (211 aa).

Disordered stretches follow at residues 1 to 22 and 81 to 211; these read MAAE…PSSS and KGAS…AAKK. One can recognise an H15 domain in the interval 17–91; it reads AHPSSSEMVL…GASGSFKLGK (75 aa). Composition is skewed to basic and acidic residues over residues 95 to 107 and 114 to 123; these read GKSD…DAAK and KKKEAKEKKA. 2 stretches are compositionally biased toward basic residues: residues 124 to 177 and 185 to 211; these read ARSK…KKAA and KAAK…AAKK.

The protein belongs to the histone H1/H5 family.

The protein resides in the nucleus. It localises to the chromosome. In terms of biological role, histones H1 are necessary for the condensation of nucleosome chains into higher-order structures. In Strongylocentrotus purpuratus (Purple sea urchin), this protein is Histone H1-beta, late embryonic.